A 163-amino-acid polypeptide reads, in one-letter code: Phosphopantetheine adenylyltransferase (163 aa).

Position 9 (Ser-9) interacts with substrate. Residues 9–10 (SF) and His-17 each bind ATP. Substrate is bound by residues Lys-41, Thr-73, and Arg-87. ATP-binding positions include 88–90 (GLR), Glu-98, and 123–129 (YAYFSSS).

The protein belongs to the bacterial CoaD family. Homohexamer. Requires Mg(2+) as cofactor.

The protein localises to the cytoplasm. The catalysed reaction is (R)-4'-phosphopantetheine + ATP + H(+) = 3'-dephospho-CoA + diphosphate. Its pathway is cofactor biosynthesis; coenzyme A biosynthesis; CoA from (R)-pantothenate: step 4/5. Functionally, reversibly transfers an adenylyl group from ATP to 4'-phosphopantetheine, yielding dephospho-CoA (dPCoA) and pyrophosphate. The protein is Phosphopantetheine adenylyltransferase of Lactiplantibacillus plantarum (strain ATCC BAA-793 / NCIMB 8826 / WCFS1) (Lactobacillus plantarum).